The primary structure comprises 423 residues: MKEIISRHKAGEQIGICSVCSAHPLVIESALRFDLNSGNKVLIEATSNQVNQFGGYTGMKPADFRDFVYGIAQEVGFPRERLILGGDHLGPNCWQNEPADTAMEKSVELIKAYVAAGFSKIHLDASMSCADDPTPLDPMVVAKRAALLCQAAETTATDEQKRHLTYVIGTEVPVPGGEASAINAVHVTREQDAARTLQTHQAAFRALGLDEALNRVIAIVVQPGVEFDHTQIIHYQPQAAKALSNWIKETPMVYEAHSTDYQTRQAYRALVRDHYAILKVGPALTFALREAIFALAQMENELISPEQRSRVLEVIDEVMLNEPGYWKKYYRPTWSQAMVDIHFSLSDRIRYYWPHPRIRQSVEKLIANLNNVTLPLGLISQFMPVQFERLSEGVLTPTPHNLIIDKIQDVLRAYRFGCTPDVA.

Belongs to the GatZ/KbaZ family. GatZ subfamily. Forms a complex with GatY.

It participates in carbohydrate metabolism; D-tagatose 6-phosphate degradation; D-glyceraldehyde 3-phosphate and glycerone phosphate from D-tagatose 6-phosphate: step 2/2. Functionally, component of the tagatose-1,6-bisphosphate aldolase GatYZ that is required for full activity and stability of the Y subunit. Could have a chaperone-like function for the proper and stable folding of GatY. When expressed alone, GatZ does not show any aldolase activity. Is involved in the catabolism of galactitol. This chain is D-tagatose-1,6-bisphosphate aldolase subunit GatZ, found in Salmonella dublin (strain CT_02021853).